The primary structure comprises 1328 residues: Protein turtle homolog B (1328 aa).

Positions 1 to 20 (MIWYVATLIASVISTRGLVA) are cleaved as a signal peptide. Topologically, residues 21–722 (QVAHGLREEP…DLTDDGLARP (702 aa)) are extracellular. 5 Ig-like domains span residues 30–115 (PEFV…ECKV), 139–226 (PTFT…LLVQ), 228–320 (PPFI…AYLT), 324–415 (PARV…ARLV), and 420–504 (PYFT…THLT). 2 cysteine pairs are disulfide-bonded: Cys45/Cys113 and Cys161/Cys208. N-linked (GlcNAc...) asparagine glycans are attached at residues Asn241 and Asn258. 3 cysteine pairs are disulfide-bonded: Cys250-Cys303, Cys346-Cys397, and Cys442-Cys488. Fibronectin type-III domains are found at residues 512–604 (APGS…TLAF) and 614–708 (LVTP…STDI). An N-linked (GlcNAc...) asparagine glycan is attached at Asn624. Residues 723–743 (VLAGIVATICFLAAAILFSTL) form a helical membrane-spanning segment. Topologically, residues 744–1328 (AACFVNKQRK…EPPTTLPTSG (585 aa)) are cytoplasmic. 3 disordered regions span residues 758–817 (RKKD…EKEL), 914–1040 (PMSS…PEPW), and 1107–1328 (SPGR…PTSG). Phosphoserine occurs at positions 775, 783, and 794. A compositionally biased stretch (low complexity) spans 990–1001 (SPLSSVMSSPPL). Polar residues-rich tracts occupy residues 1018-1033 (ENAS…TPTG), 1129-1141 (LVSQ…TSQG), and 1199-1214 (SRLS…SRTG). Arg1136 bears the Omega-N-methylarginine mark. A phosphoserine mark is found at Ser1207 and Ser1215. The span at 1246-1273 (SFSRKSTPSSTGSPSQSSRSGSPSYRPT) shows a compositional bias: low complexity. Pro residues-rich tracts occupy residues 1284-1295 (PSPPPGPAPPAP) and 1318-1328 (PEPPTTLPTSG).

Belongs to the immunoglobulin superfamily. Turtle family. As to quaternary structure, found in a complex with MAGI2 and NLGN2, where it interacts with MAGI2 (via PDZ 5 and PDZ 6 domains). Post-translationally, N-glycosylated and sialylated. Not significantly O-glycosylated. Detected primarily in brain, including cortex, hippocampus, cerebellum and striatum. Largely restricted to inhibitory GABAergic interneurons (at protein level).

It localises to the postsynaptic cell membrane. The protein resides in the postsynaptic density. Its function is as follows. Transmembrane protein which is abundantly expressed in interneurons, where it may regulate inhibitory synapse development. May mediate homophilic cell adhesion. The polypeptide is Protein turtle homolog B (Rattus norvegicus (Rat)).